Reading from the N-terminus, the 207-residue chain is Protein TEX261 homolog (207 aa).

Helical transmembrane passes span 2 to 22 (FLSL…VVCL), 54 to 74 (IIFL…FSFI), 94 to 114 (YKFI…FIYF), and 126 to 146 (IIAI…ISLA).

Belongs to the SVP26 family.

Its subcellular location is the membrane. In Dictyostelium discoideum (Social amoeba), this protein is Protein TEX261 homolog.